A 120-amino-acid polypeptide reads, in one-letter code: Vanadium-binding protein 2 (120 aa).

A signal peptide spans 1–20; sequence MSKVIFALVLVVVLVACINA. Positions 21 to 29 are excised as a propeptide; that stretch reads TYVEFEEAY. Cystine bridges form between Cys34–Cys88, Cys38–Cys84, Cys42–Cys81, Cys48–Cys74, Cys52–Cys69, Cys56–Cys65, Cys92–Cys119, Cys97–Cys114, and Cys101–Cys111.

Interacts with VIP1. Expressed in vanadocytes.

It is found in the cytoplasm. Functionally, acts as a vanadium reductase which may form an electron transfer cascade in conjunction with NADPH and glutathione through thiol disulfide exchange reactions. Partial cleavage of its disulfide bonds results in the reduction of V(5+) to V(4+). Binds up to 24 V(4+) ions per protein at pH 7.5. Also binds Fe(3+) and Cu(2+) and, to a lesser extent, Co(2+), Zn(2+) and Ni(2+). This Ascidia sydneiensis samea (Vanadium-rich ascidian) protein is Vanadium-binding protein 2.